The following is a 365-amino-acid chain: Dual-specificity RNA methyltransferase RlmN (365 aa).

The Proton acceptor role is filled by glutamate 91. Positions 97–337 constitute a Radical SAM core domain; that stretch reads ETSRGTLCIS…TTVRKTRGDD (241 aa). The cysteines at positions 104 and 342 are disulfide-linked. Residues cysteine 111, cysteine 115, and cysteine 118 each contribute to the [4Fe-4S] cluster site. S-adenosyl-L-methionine is bound by residues 168–169, serine 200, 222–224, and asparagine 299; these read GE and SLH. The active-site S-methylcysteine intermediate is the cysteine 342.

The protein belongs to the radical SAM superfamily. RlmN family. It depends on [4Fe-4S] cluster as a cofactor.

The protein localises to the cytoplasm. The enzyme catalyses adenosine(2503) in 23S rRNA + 2 reduced [2Fe-2S]-[ferredoxin] + 2 S-adenosyl-L-methionine = 2-methyladenosine(2503) in 23S rRNA + 5'-deoxyadenosine + L-methionine + 2 oxidized [2Fe-2S]-[ferredoxin] + S-adenosyl-L-homocysteine. The catalysed reaction is adenosine(37) in tRNA + 2 reduced [2Fe-2S]-[ferredoxin] + 2 S-adenosyl-L-methionine = 2-methyladenosine(37) in tRNA + 5'-deoxyadenosine + L-methionine + 2 oxidized [2Fe-2S]-[ferredoxin] + S-adenosyl-L-homocysteine. Functionally, specifically methylates position 2 of adenine 2503 in 23S rRNA and position 2 of adenine 37 in tRNAs. m2A2503 modification seems to play a crucial role in the proofreading step occurring at the peptidyl transferase center and thus would serve to optimize ribosomal fidelity. This Nitrosospira multiformis (strain ATCC 25196 / NCIMB 11849 / C 71) protein is Dual-specificity RNA methyltransferase RlmN.